The primary structure comprises 194 residues: dCTP deaminase (194 aa).

Residues R110–R115, D128, V136–E138, Y171, K178, and Q182 each bind dCTP. The active-site Proton donor/acceptor is the E138.

This sequence belongs to the dCTP deaminase family. As to quaternary structure, homotrimer.

The enzyme catalyses dCTP + H2O + H(+) = dUTP + NH4(+). It participates in pyrimidine metabolism; dUMP biosynthesis; dUMP from dCTP (dUTP route): step 1/2. In terms of biological role, catalyzes the deamination of dCTP to dUTP. The polypeptide is dCTP deaminase (Pseudoalteromonas translucida (strain TAC 125)).